A 1113-amino-acid polypeptide reads, in one-letter code: Lon protease homolog, mitochondrial (1113 aa).

A mitochondrion-targeting transit peptide spans 1–61 (MLRGQTLPWR…RAFSSSSIRR (61 aa)). Residues 42-196 (SRLHRSLPTS…SGEKALQKPS (155 aa)) form a disordered region. 3 stretches are compositionally biased toward basic and acidic residues: residues 64-99 (KPPPGDEKDDPAQKEQKDANEEKDVERAPDARRKAA), 124-143 (KAGADKEQRGLEEDSKKDGN), and 178-192 (DGGKKGKKGSGEKAL). Residues 204–456 (VMAIPIAKRP…KALVVLKKEL (253 aa)) form the Lon N-terminal domain. Position 609–616 (609–616 (GPPGVGKT)) interacts with ATP. Positions 828-858 (LTDEGKAVQEESQKETESPDSKSPVDPEKST) are enriched in basic and acidic residues. Residues 828 to 864 (LTDEGKAVQEESQKETESPDSKSPVDPEKSTTETPRV) are disordered. Residues 898–1084 (TFPPGVTMGL…SEVFDLLFTD (187 aa)) form the Lon proteolytic domain. Catalysis depends on residues Ser-990 and Lys-1033.

This sequence belongs to the peptidase S16 family. Homohexamer or homoheptamer. Organized in a ring with a central cavity.

It localises to the mitochondrion matrix. The enzyme catalyses Hydrolysis of proteins in presence of ATP.. Its function is as follows. ATP-dependent serine protease that mediates the selective degradation of misfolded, unassembled or oxidatively damaged polypeptides as well as certain short-lived regulatory proteins in the mitochondrial matrix. May also have a chaperone function in the assembly of inner membrane protein complexes. Participates in the regulation of mitochondrial gene expression and in the maintenance of the integrity of the mitochondrial genome. Binds to mitochondrial DNA in a site-specific manner. The sequence is that of Lon protease homolog, mitochondrial (pim1) from Aspergillus niger (strain ATCC MYA-4892 / CBS 513.88 / FGSC A1513).